A 330-amino-acid polypeptide reads, in one-letter code: Olfactory receptor 5P70 (330 aa).

The Extracellular segment spans residues M1–D28. Residue N8 is glycosylated (N-linked (GlcNAc...) asparagine). The chain crosses the membrane as a helical span at residues I29–I49. At L50–Q57 the chain is on the cytoplasmic side. The chain crosses the membrane as a helical span at residues L58–S78. The Extracellular segment spans residues S79–I102. Cysteines 100 and 192 form a disulfide. A helical transmembrane segment spans residues Q103–Y123. At D124 to S136 the chain is on the cytoplasmic side. The chain crosses the membrane as a helical span at residues T137 to L157. At N158–V199 the chain is on the extracellular side. A helical transmembrane segment spans residues V200–S220. Residues Y221–A240 are Cytoplasmic-facing. The chain crosses the membrane as a helical span at residues F241–I261. The Extracellular portion of the chain corresponds to Y262–N274. The helical transmembrane segment at K275–L295 threads the bilayer. Over R296 to V330 the chain is Cytoplasmic.

The protein belongs to the G-protein coupled receptor 1 family.

The protein resides in the cell membrane. In terms of biological role, potential odorant receptor. This is Olfactory receptor 5P70 from Mus musculus (Mouse).